We begin with the raw amino-acid sequence, 309 residues long: Isoaspartyl peptidase/L-asparaginase (309 aa).

The active-site Nucleophile is the Thr-166. Substrate is bound by residues 194 to 197 (RVGD) and 217 to 220 (TGHG).

It belongs to the Ntn-hydrolase family. As to quaternary structure, heterodimer of an alpha and beta chain produced by autocleavage. Cleaved into an alpha and beta chain by autocatalysis; this activates the enzyme. The N-terminal residue of the beta subunit is responsible for the nucleophile hydrolase activity.

Its subcellular location is the cytoplasm. The catalysed reaction is L-asparagine + H2O = L-aspartate + NH4(+). The enzyme catalyses Cleavage of a beta-linked Asp residue from the N-terminus of a polypeptide.. Its function is as follows. Has both L-asparaginase and beta-aspartyl peptidase activity. Does not have aspartylglucosaminidase activity and is inactive toward GlcNAc-L-Asn. Likewise, has no activity toward glutamine. This Xenopus laevis (African clawed frog) protein is Isoaspartyl peptidase/L-asparaginase (asrgl1).